We begin with the raw amino-acid sequence, 338 residues long: Aspartate carbamoyltransferase catalytic subunit (338 aa).

Arginine 59 and threonine 60 together coordinate carbamoyl phosphate. Lysine 87 contributes to the L-aspartate binding site. 3 residues coordinate carbamoyl phosphate: arginine 109, histidine 142, and glutamine 145. Arginine 182 and arginine 253 together coordinate L-aspartate. 2 residues coordinate carbamoyl phosphate: glycine 294 and proline 295.

It belongs to the aspartate/ornithine carbamoyltransferase superfamily. ATCase family. In terms of assembly, heterododecamer (2C3:3R2) of six catalytic PyrB chains organized as two trimers (C3), and six regulatory PyrI chains organized as three dimers (R2).

The catalysed reaction is carbamoyl phosphate + L-aspartate = N-carbamoyl-L-aspartate + phosphate + H(+). It participates in pyrimidine metabolism; UMP biosynthesis via de novo pathway; (S)-dihydroorotate from bicarbonate: step 2/3. Catalyzes the condensation of carbamoyl phosphate and aspartate to form carbamoyl aspartate and inorganic phosphate, the committed step in the de novo pyrimidine nucleotide biosynthesis pathway. The chain is Aspartate carbamoyltransferase catalytic subunit from Prochlorococcus marinus (strain AS9601).